The sequence spans 84 residues: Putative membrane protein insertion efficiency factor (84 aa).

This sequence belongs to the UPF0161 family.

Its subcellular location is the cell inner membrane. Its function is as follows. Could be involved in insertion of integral membrane proteins into the membrane. The chain is Putative membrane protein insertion efficiency factor from Shewanella halifaxensis (strain HAW-EB4).